The chain runs to 782 residues: Protein phosphatase 1 regulatory subunit 12C (782 aa).

Positions 1 to 17 are enriched in low complexity; the sequence is MSGEDGPAAGPGAAAAA. Positions 1 to 43 are disordered; it reads MSGEDGPAAGPGAAAAAARERRREQLRQWGARAGAEPGPGERR. Serine 2 carries the post-translational modification N-acetylserine. ANK repeat units follow at residues 100 to 129, 133 to 162, 226 to 255, and 259 to 288; these read DGIS…TVNQ, EGWT…NIAA, TGAS…DPEL, and DGWT…GMDS. Residues 297-329 adopt a coiled-coil conformation; that stretch reads CDLADEEVLSLLEELARKQEDLRNQKEASQSRG. The tract at residues 316–686 is disordered; that stretch reads EDLRNQKEAS…EEPDGGFRTL (371 aa). Residues 323-337 show a composition bias toward polar residues; sequence EASQSRGQEPQAPSS. Residues 349 to 365 are compositionally biased toward basic and acidic residues; that stretch reads SSREKISLQDLSKERRP. Acidic residues predominate over residues 374-383; the sequence is QDEDEGEEGP. A phosphoserine mark is found at serine 399, serine 407, serine 427, serine 452, and serine 509. Positions 449 to 463 are enriched in polar residues; that stretch reads RSASSSWLEGTSTQA. Residues 537-546 are compositionally biased toward basic and acidic residues; it reads VRDEESESQR. Basic residues predominate over residues 547–557; that stretch reads KARSRLMRQSR. Threonine 560 carries the post-translational modification Phosphothreonine; by CDC42BP and ROCK2. Over residues 567-583 the composition is skewed to basic and acidic residues; sequence DLKEAEKAAGKAPESEK. Residues serine 604 and serine 647 each carry the phosphoserine modification. The span at 670–680 shows a compositional bias: acidic residues; it reads PEPEPESEEPD. A coiled-coil region spans residues 681 to 782; the sequence is GGFRTLYAEL…LIRVISKLSK (102 aa).

In terms of assembly, PP1 comprises a catalytic subunit, PPP1CA, PPP1CB or PPP1CC, and one or several targeting or regulatory subunits. PPP1R12C mediates binding to myosin. Interacts via its N-terminus with PPP1CB. Interacts with IL16. Interacts with the coiled-coil domain of MPRIP. Interacts with NOD2. In terms of processing, phosphorylation at Thr-560 is essential for its interaction with PPP1CB. As to expression, ubiquitously expressed. Highly expressed in heart.

It localises to the cytoplasm. It is found in the cytoskeleton. Its subcellular location is the stress fiber. Functionally, regulates myosin phosphatase activity. In Homo sapiens (Human), this protein is Protein phosphatase 1 regulatory subunit 12C.